Consider the following 447-residue polypeptide: GA-binding protein subunit beta-2 (447 aa).

ANK repeat units lie at residues 5–34 (DLGKRLLEAARKGQDDEVRTLMANGAPFTT), 37–66 (LGTSPLHLAAQYGHYSTAEVLLRAGVSRDA), 70–99 (VDRTPLHMAAADGHAHIVELLVRNGADVNA), 103–132 (LKMTALHWATEHHHRDVVELLIKYGADVHA), and 136–166 (FDKSAFDIALEKNNAEILVILQEAMQNQVNA). At serine 253 the chain carries Phosphoserine. Residues 345-395 (EESKEGTERELLQQRLQEANRRAQEYRHQLLKKEQEAEQYRLRLEAMARQQ) adopt a coiled-coil conformation. Residues 418–447 (REMEERETEVTGAVGTAEPHTGVSMETVST) are disordered.

As to quaternary structure, heterotetramer of two alpha and two beta subunits. The C-terminal is necessary for the formation of a heterotetrameric GABP-alpha-2/beta-2 complex, and also facilitates homotypic dimerization. Interacts with ADGRB2.

The protein resides in the nucleus. In terms of biological role, may function as transcription factor capable of interacting with purine rich repeats (GA repeats). The sequence is that of GA-binding protein subunit beta-2 (GABPB2) from Bos taurus (Bovine).